The chain runs to 242 residues: 1-(5-phosphoribosyl)-5-[(5-phosphoribosylamino)methylideneamino] imidazole-4-carboxamide isomerase (242 aa).

The active-site Proton acceptor is Asp10. The active-site Proton donor is the Asp132.

It belongs to the HisA/HisF family.

The protein resides in the cytoplasm. The enzyme catalyses 1-(5-phospho-beta-D-ribosyl)-5-[(5-phospho-beta-D-ribosylamino)methylideneamino]imidazole-4-carboxamide = 5-[(5-phospho-1-deoxy-D-ribulos-1-ylimino)methylamino]-1-(5-phospho-beta-D-ribosyl)imidazole-4-carboxamide. Its pathway is amino-acid biosynthesis; L-histidine biosynthesis; L-histidine from 5-phospho-alpha-D-ribose 1-diphosphate: step 4/9. This chain is 1-(5-phosphoribosyl)-5-[(5-phosphoribosylamino)methylideneamino] imidazole-4-carboxamide isomerase, found in Methanopyrus kandleri (strain AV19 / DSM 6324 / JCM 9639 / NBRC 100938).